Consider the following 1198-residue polypeptide: Tetratricopeptide repeat protein 17 (1198 aa).

One copy of the TPR 1 repeat lies at 295–328 (FTSYYTLGNIYAMLGEYNHSVLCYDHALQAKPGF). Positions 340-382 (CQQKLEQKLEAQHRSLQRTLNELKEYQKQHDHYLRQQEILEKH) form a coiled coil. TPR repeat units follow at residues 619-652 (WLIL…APVQ) and 689-722 (PLTF…TTRC). 2 disordered regions span residues 771 to 825 (PQSL…KSEE) and 903 to 924 (KKPK…QAEN). Over residues 903–914 (KKPKGDHKKPPG) the composition is skewed to basic residues. TPR repeat units lie at residues 1071 to 1105 (SWVL…APHQ), 1108 to 1141 (DVPL…APHF), and 1142 to 1175 (AVNH…QPEF).

The protein belongs to the TTC17 family. Interacts with CATIP. In terms of tissue distribution, expressed in germ cells as well as in somatic cells of the testis (at protein level). Ubiquitous.

Its subcellular location is the cytoplasm. The protein localises to the cell membrane. The protein resides in the cytoskeleton. Its function is as follows. Plays a role in primary ciliogenesis by modulating actin polymerization. This Rattus norvegicus (Rat) protein is Tetratricopeptide repeat protein 17 (Ttc17).